Here is a 108-residue protein sequence, read N- to C-terminus: Anti-sigma-B factor antagonist (108 aa).

The STAS domain maps to L3–E108. S57 carries the post-translational modification Phosphoserine.

It belongs to the anti-sigma-factor antagonist family. In terms of processing, phosphorylated by RsbW on a serine residue.

Its function is as follows. Positive regulator of sigma-B activity. Non-phosphorylated RsbV binds to RsbW, preventing its association with sigma-B. When phosphorylated, releases RsbW, which is then free to complex with and inactivate sigma-B. This is Anti-sigma-B factor antagonist (rsbV) from Staphylococcus aureus (strain NCTC 8325 / PS 47).